The sequence spans 540 residues: Phenylalanine--tRNA ligase beta subunit (540 aa).

Residues 268 to 342 (LRHTSVPFSL…MAYGYDRFTL (75 aa)) form the B5 domain. 4 residues coordinate Mg(2+): D320, D326, E329, and D330.

The protein belongs to the phenylalanyl-tRNA synthetase beta subunit family. Type 2 subfamily. As to quaternary structure, tetramer of two alpha and two beta subunits. Requires Mg(2+) as cofactor.

Its subcellular location is the cytoplasm. The catalysed reaction is tRNA(Phe) + L-phenylalanine + ATP = L-phenylalanyl-tRNA(Phe) + AMP + diphosphate + H(+). This chain is Phenylalanine--tRNA ligase beta subunit, found in Metallosphaera sedula (strain ATCC 51363 / DSM 5348 / JCM 9185 / NBRC 15509 / TH2).